We begin with the raw amino-acid sequence, 160 residues long: Eosinophil cationic protein (160 aa).

The signal sequence occupies residues 1 to 27 (MVPKLFTSQICLLLLLGLMGVEGSLHA). A required for nearly all of the bactericidal activities; partially involved in LPS-binding region spans residues 28 to 72 (RPPQFTRAQWFAIQHISLNPPRCTIAMRVINNYRWRCKNQNTFLR). Histidine 42 functions as the Proton acceptor in the catalytic mechanism. 4 disulfides stabilise this stretch: cysteine 50–cysteine 110, cysteine 64–cysteine 123, cysteine 82–cysteine 138, and cysteine 89–cysteine 98. 3'-nitrotyrosine is present on tyrosine 60. 65–69 (KNQNT) contributes to the substrate binding site. N-linked (GlcNAc...) asparagine glycosylation is found at asparagine 84, asparagine 92, and asparagine 119. Catalysis depends on histidine 155, which acts as the Proton donor.

It belongs to the pancreatic ribonuclease family. Interacts with bacterial lipopolysaccharide (LPS) and lipoteichoic acid (LTA). In vitro interacts with phospholipid bilayers.

The protein resides in the secreted. Functionally, cytotoxin and helminthotoxin with low-efficiency ribonuclease activity. Possesses a wide variety of biological activities. Exhibits antibacterial activity. The polypeptide is Eosinophil cationic protein (RNASE3) (Gorilla gorilla gorilla (Western lowland gorilla)).